The chain runs to 269 residues: Surfeit locus protein 4 (269 aa).

Helical transmembrane passes span 64–84 (FLAT…CVLV), 92–112 (YACF…SILW), 179–199 (FFSI…AVGF), 203–223 (LAAL…NAFW), and 242–262 (TTSV…GVSM). The Di-lysine motif signature appears at 266–269 (KKEW).

This sequence belongs to the SURF4 family.

It is found in the endoplasmic reticulum membrane. The protein resides in the endoplasmic reticulum-Golgi intermediate compartment membrane. The protein localises to the golgi apparatus membrane. In terms of biological role, endoplasmic reticulum cargo receptor that mediates the export of lipoproteins by recruiting cargos into COPII vesicles to facilitate their secretion. This chain is Surfeit locus protein 4, found in Danio rerio (Zebrafish).